We begin with the raw amino-acid sequence, 1464 residues long: Collagen alpha-1(I) chain (1464 aa).

The N-terminal stretch at 1-22 (MFSFVDLRLLLLLAATALLTHG) is a signal peptide. Positions 23 to 161 (QEEGQVEGQD…PPGLGGNFAP (139 aa)) are cleaved as a propeptide — N-terminal propeptide. One can recognise a VWFC domain in the interval 38–96 (ITCVQNGLRYHDRDVWKPEPCRICVCDNGKVLCDDVICDETKNCPGAEVPEGECCPVCP). The segment at 98–1214 (GSESPTDQET…PQEKAHDGGR (1117 aa)) is disordered. Residues 138 to 153 (PGLPGPPGPPGPPGPP) show a composition bias toward pro residues. Residue glutamine 162 is modified to Pyrrolidone carboxylic acid. Residues 162 to 178 (QLSYGYDEKSTGGISVP) are nonhelical region (N-terminal). Lysine 170 bears the Allysine mark. Phosphoserine is present on serine 171. The segment at 179 to 1192 (GPMGPSGPRG…PGPPGPPGPP (1014 aa)) is triple-helical region. 11 positions are modified to 4-hydroxyproline: proline 190, proline 193, proline 196, proline 205, proline 208, proline 211, proline 226, proline 241, proline 247, proline 256, and proline 262. Low complexity predominate over residues 198–217 (PQGFQGPPGEPGEPGASGPM). A compositionally biased stretch (basic and acidic residues) spans 229–243 (NGDDGEAGKPGRPGE). At lysine 265 the chain carries 5-hydroxylysine; alternate. An O-linked (Gal...) hydroxylysine; alternate glycan is attached at lysine 265. Residue serine 271 is modified to Phosphoserine. A compositionally biased stretch (low complexity) spans 279–295 (DAGPAGPKGEPGSPGEN). Residues proline 289, proline 292, proline 298, proline 307, and proline 313 each carry the 4-hydroxyproline modification. Residues 318–331 (PAGARGNDGATGAA) are compositionally biased toward low complexity. The segment covering 333–345 (PPGPTGPAGPPGF) has biased composition (pro residues). Proline 334, proline 343, proline 346, proline 373, proline 376, proline 388, proline 394, proline 403, proline 409, proline 412, and proline 427 each carry 4-hydroxyproline. Residues 379–418 (AGAAGPAGNPGADGQPGAKGANGAPGIAGAPGFPGARGPS) show a composition bias toward low complexity. Lysine 430 carries the 5-hydroxylysine modification. 4-hydroxyproline is present on residues proline 436, proline 439, proline 451, proline 460, proline 475, proline 481, proline 490, and proline 496. The span at 448 to 457 (KGEPGPVGVQ) shows a compositional bias: low complexity. Positions 485-494 (GERGGPGSRG) are enriched in gly residues. At lysine 505 the chain carries 5-hydroxylysine. Proline 514, proline 523, proline 529, proline 535, proline 544, proline 547, proline 556, proline 565, proline 571, proline 583, proline 592, proline 601, proline 604, proline 622, proline 640, proline 646, proline 652, proline 658, proline 664, proline 670, proline 682, proline 691, proline 703, proline 715, proline 718, proline 724, proline 730, and proline 739 each carry 4-hydroxyproline. Residues 538–564 (KGLTGSPGSPGPDGKTGPPGPAGQDGR) show a composition bias toward low complexity. A compositionally biased stretch (low complexity) spans 573–592 (ARGQAGVMGFPGPKGAAGEP). Positions 634–661 (QGPAGSPGFQGLPGPAGPPGEAGKPGEQ) are enriched in low complexity. The segment covering 696 to 724 (PRGANGAPGNDGAKGDAGAPGAPGSQGAP) has biased composition (low complexity). Positions 745–747 (RGD) match the Cell attachment site motif. Lysine 751 carries the 5-hydroxylysine modification. 4-hydroxyproline occurs at positions 757, 772, and 778. Residues 784 to 798 (SGPSGPAGPTGARGA) are compositionally biased toward low complexity. Residue serine 787 is modified to Phosphoserine. Proline 799, proline 805, proline 808, proline 817, proline 823, proline 841, proline 850, and proline 859 each carry 4-hydroxyproline. A compositionally biased stretch (low complexity) spans 811-838 (AGFAGPPGADGQPGAKGEPGDAGAKGDA). Residues 840–852 (PPGPAGPAGPPGP) are compositionally biased toward pro residues. Residues 853–883 (IGNVGAPGAKGARGSAGPPGATGFPGAAGRV) show a composition bias toward low complexity. Lysine 862 bears the 5-hydroxylysine mark. 2 positions are modified to 4-hydroxyproline: proline 871 and proline 877. 3-hydroxyproline is present on proline 885. 4-hydroxyproline is present on residues proline 886, proline 895, proline 898, proline 919, proline 928, proline 937, proline 946, proline 964, proline 973, proline 976, proline 982, proline 997, proline 1003, proline 1009, proline 1018, and proline 1024. Over residues 912–921 (ETGPAGRPGE) the composition is skewed to low complexity. The span at 931-955 (AGEKGSPGADGPAGAPGTPGPQGIA) shows a compositional bias: low complexity. The span at 996 to 1006 (PPGPMGPPGLA) shows a compositional bias: pro residues. A 5-hydroxylysine modification is found at lysine 1033. A compositionally biased stretch (pro residues) spans 1042–1057 (AGPPGAPGAPGAPGPV). Proline 1045, proline 1048, and proline 1051 each carry 4-hydroxyproline. A compositionally biased stretch (low complexity) spans 1078–1092 (VGPVGARGPAGPQGP). A Cell attachment site motif is present at residues 1093–1095 (RGD). Residues 1093–1107 (RGDKGETGEQGDRGI) are compositionally biased toward basic and acidic residues. Lysine 1096 bears the 5-hydroxylysine mark. Lysine 1108 carries the 5-hydroxylysine; alternate modification. O-linked (Gal...) hydroxylysine; alternate glycosylation is present at lysine 1108. 5 positions are modified to 4-hydroxyproline: proline 1120, proline 1123, proline 1126, proline 1144, and proline 1159. A compositionally biased stretch (low complexity) spans 1126-1159 (PGEQGPSGASGPAGPRGPPGSAGAPGKDGLNGLP). Proline 1164 is subject to 3-hydroxyproline. The residue at position 1165 (proline 1165) is a 4-hydroxyproline. The segment covering 1177 to 1192 (VGPPGPPGPPGPPGPP) has biased composition (pro residues). The residue at position 1179 (proline 1179) is a 3-hydroxyproline. Proline 1180 carries the post-translational modification 4-hydroxyproline. Residue proline 1182 is modified to 3-hydroxyproline. At proline 1183 the chain carries 4-hydroxyproline. A 3-hydroxyproline modification is found at proline 1185. Proline 1186, proline 1189, and proline 1192 each carry 4-hydroxyproline. The segment at 1193-1218 (SAGFDFSFLPQPPQEKAHDGGRYYRA) is nonhelical region (C-terminal). The residue at position 1208 (lysine 1208) is an Allysine. The propeptide at 1219–1464 (DDANVVRDRD…GFDVGPVCFL (246 aa)) is C-terminal propeptide. The Fibrillar collagen NC1 domain occupies 1229–1464 (LEVDTTLKSL…GFDVGPVCFL (236 aa)). Disulfide bonds link cysteine 1259–cysteine 1291, cysteine 1299–cysteine 1462, and cysteine 1370–cysteine 1415. Ca(2+) contacts are provided by aspartate 1277, asparagine 1279, glutamine 1280, cysteine 1282, and aspartate 1285. Asparagine 1365 is a glycosylation site (N-linked (GlcNAc...) asparagine).

Belongs to the fibrillar collagen family. As to quaternary structure, trimers of one alpha 2(I) and two alpha 1(I) chains. Interacts with MRC2. Interacts with TRAM2. Interacts with MFAP4 in a Ca (2+)-dependent manner. Contains mostly 4-hydroxyproline. Proline residues at the third position of the tripeptide repeating unit (G-X-Y) are hydroxylated in some or all of the chains. In terms of processing, contains 3-hydroxyproline at a few sites. This modification occurs on the first proline residue in the sequence motif Gly-Pro-Hyp, where Hyp is 4-hydroxyproline. Post-translationally, lysine residues at the third position of the tripeptide repeating unit (G-X-Y) are 5-hydroxylated in some or all of the chains. O-glycosylated on hydroxylated lysine residues. The O-linked glycan consists of a Glc-Gal disaccharide. In terms of tissue distribution, forms the fibrils of tendon, ligaments and bones. In bones the fibrils are mineralized with calcium hydroxyapatite.

It localises to the secreted. The protein localises to the extracellular space. The protein resides in the extracellular matrix. Functionally, type I collagen is a member of group I collagen (fibrillar forming collagen). This is Collagen alpha-1(I) chain (COL1A1) from Homo sapiens (Human).